Consider the following 37-residue polypeptide: Large ribosomal subunit protein bL36c (37 aa).

This sequence belongs to the bacterial ribosomal protein bL36 family.

The protein resides in the plastid. It is found in the chloroplast. The protein is Large ribosomal subunit protein bL36c (rpl36) of Euglena gracilis.